Here is a 490-residue protein sequence, read N- to C-terminus: Cytochrome P450 2C1 (490 aa).

A heme-binding site is contributed by C435.

The protein belongs to the cytochrome P450 family. It depends on heme as a cofactor.

It localises to the endoplasmic reticulum membrane. The protein resides in the microsome membrane. The catalysed reaction is an organic molecule + reduced [NADPH--hemoprotein reductase] + O2 = an alcohol + oxidized [NADPH--hemoprotein reductase] + H2O + H(+). Cytochromes P450 are a group of heme-thiolate monooxygenases. In liver microsomes, this enzyme is involved in an NADPH-dependent electron transport pathway. It oxidizes a variety of structurally unrelated compounds, including steroids, fatty acids, and xenobiotics. This chain is Cytochrome P450 2C1 (CYP2C1), found in Oryctolagus cuniculus (Rabbit).